The following is a 260-amino-acid chain: Neuraminyllactose-binding hemagglutinin (260 aa).

Residues 1 to 27 (MKTNGHFKDFAWKKCFLGASVVALLVG) form the signal peptide. Residue Cys-28 is the site of N-palmitoyl cysteine attachment. Cys-28 carries S-diacylglycerol cysteine lipidation.

Its subcellular location is the cell outer membrane. This chain is Neuraminyllactose-binding hemagglutinin (hpaA), found in Helicobacter pylori (strain J99 / ATCC 700824) (Campylobacter pylori J99).